A 302-amino-acid chain; its full sequence is Sulfate adenylyltransferase subunit 2 (302 aa).

Belongs to the PAPS reductase family. CysD subfamily. Heterodimer composed of CysD, the smaller subunit, and CysN.

It carries out the reaction sulfate + ATP + H(+) = adenosine 5'-phosphosulfate + diphosphate. The protein operates within sulfur metabolism; hydrogen sulfide biosynthesis; sulfite from sulfate: step 1/3. Functionally, with CysN forms the ATP sulfurylase (ATPS) that catalyzes the adenylation of sulfate producing adenosine 5'-phosphosulfate (APS) and diphosphate, the first enzymatic step in sulfur assimilation pathway. APS synthesis involves the formation of a high-energy phosphoric-sulfuric acid anhydride bond driven by GTP hydrolysis by CysN coupled to ATP hydrolysis by CysD. This is Sulfate adenylyltransferase subunit 2 from Sodalis glossinidius (strain morsitans).